A 286-amino-acid polypeptide reads, in one-letter code: Pyridoxine 4-dehydrogenase (286 aa).

The active-site Proton donor is the Y59. 210 to 218 contributes to the NADP(+) binding site; it reads FPLGGFTPL.

Belongs to the aldo/keto reductase family. Aldo/keto reductase 2 subfamily.

The enzyme catalyses pyridoxine + NADP(+) = pyridoxal + NADPH + H(+). The catalysed reaction is pyridoxine + NAD(+) = pyridoxal + NADH + H(+). In terms of biological role, catalyzes the NAD(P)H-dependent reduction of pyridoxal to pyridoxine in vitro. Is not able to reduce 4-pyridoxate, and to oxidize pyridoxine or pyridoxamine. Has Kemp eliminase activity towards the non-physiological substrate 5-nitrobenzisoxazole, producing 4-nitro-2-cyanophenol; this activity is not considered to be physiologically relevant. This Escherichia coli (strain K12) protein is Pyridoxine 4-dehydrogenase.